The sequence spans 80 residues: Translational regulator CsrA (80 aa).

Belongs to the CsrA/RsmA family. Homodimer; the beta-strands of each monomer intercalate to form a hydrophobic core, while the alpha-helices form wings that extend away from the core.

It localises to the cytoplasm. Its function is as follows. A translational regulator that binds mRNA to regulate translation initiation and/or mRNA stability. Usually binds in the 5'-UTR at or near the Shine-Dalgarno sequence preventing ribosome-binding, thus repressing translation. Its main target seems to be the major flagellin gene, while its function is anatagonized by FliW. The polypeptide is Translational regulator CsrA (Desulforamulus reducens (strain ATCC BAA-1160 / DSM 100696 / MI-1) (Desulfotomaculum reducens)).